The chain runs to 229 residues: Leucyl/phenylalanyl-tRNA--protein transferase (229 aa).

The protein belongs to the L/F-transferase family.

The protein localises to the cytoplasm. The catalysed reaction is N-terminal L-lysyl-[protein] + L-leucyl-tRNA(Leu) = N-terminal L-leucyl-L-lysyl-[protein] + tRNA(Leu) + H(+). It carries out the reaction N-terminal L-arginyl-[protein] + L-leucyl-tRNA(Leu) = N-terminal L-leucyl-L-arginyl-[protein] + tRNA(Leu) + H(+). It catalyses the reaction L-phenylalanyl-tRNA(Phe) + an N-terminal L-alpha-aminoacyl-[protein] = an N-terminal L-phenylalanyl-L-alpha-aminoacyl-[protein] + tRNA(Phe). In terms of biological role, functions in the N-end rule pathway of protein degradation where it conjugates Leu, Phe and, less efficiently, Met from aminoacyl-tRNAs to the N-termini of proteins containing an N-terminal arginine or lysine. This is Leucyl/phenylalanyl-tRNA--protein transferase from Pseudomonas syringae pv. syringae (strain B728a).